The chain runs to 201 residues: Ras-related protein Rab-9B (201 aa).

Residues valine 18, glycine 19, lysine 20, serine 21, serine 22, aspartate 33, serine 34, alanine 36, histidine 38, and threonine 39 each contribute to the GTP site. Mg(2+) is bound at residue serine 21. A Switch 1 motif is present at residues 31–42 (KFDSQAFHTIGV). A Phosphoserine modification is found at serine 34. The Mg(2+) site is built by threonine 39 and aspartate 62. The short motif at 64–78 (AGQERFKSLRTPFYR) is the Switch 2 element. Glycine 65, asparagine 124, lysine 125, alanine 155, and lysine 156 together coordinate GTP. Residues cysteine 200 and cysteine 201 are each lipidated (S-geranylgeranyl cysteine).

It belongs to the small GTPase superfamily. Rab family. In terms of assembly, interacts (GTP-bound form) with SGSM1; the GDP-bound form has much lower affinity for SGSM1. The GTP-bound form but not the GDP-bound form interacts with HPS4 and the BLOC-3 complex (heterodimer of HPS1 and HPS4) but does not interact with HPS1 alone. Interacts (GTP-bound form) with NDE1. Mg(2+) is required as a cofactor.

The protein localises to the cell membrane. It is found in the cytoplasmic vesicle. Its subcellular location is the phagosome membrane. It catalyses the reaction GTP + H2O = GDP + phosphate + H(+). Regulated by guanine nucleotide exchange factors (GEFs) which promote the exchange of bound GDP for free GTP. Regulated by GTPase activating proteins (GAPs) which increase the GTP hydrolysis activity. Inhibited by GDP dissociation inhibitors (GDIs). The small GTPases Rab are key regulators of intracellular membrane trafficking, from the formation of transport vesicles to their fusion with membranes. Rabs cycle between an inactive GDP-bound form and an active GTP-bound form that is able to recruit to membranes different sets of downstream effectors directly responsible for vesicle formation, movement, tethering and fusion. RAB9B is involved in the transport of proteins between the endosomes and the trans Golgi network. May use NDE1/NDEL1 as an effector to interact with the dynein motor complex in order to control retrograde trafficking of RAB9-associated late endosomes to the TGN. The protein is Ras-related protein Rab-9B of Mus musculus (Mouse).